Reading from the N-terminus, the 119-residue chain is Dihydroneopterin aldolase (119 aa).

Substrate is bound by residues glutamate 21, tyrosine 53, and 72-73 (ID). Residue lysine 99 is the Proton donor/acceptor of the active site.

This sequence belongs to the DHNA family.

It catalyses the reaction 7,8-dihydroneopterin = 6-hydroxymethyl-7,8-dihydropterin + glycolaldehyde. It functions in the pathway cofactor biosynthesis; tetrahydrofolate biosynthesis; 2-amino-4-hydroxy-6-hydroxymethyl-7,8-dihydropteridine diphosphate from 7,8-dihydroneopterin triphosphate: step 3/4. Its function is as follows. Catalyzes the conversion of 7,8-dihydroneopterin to 6-hydroxymethyl-7,8-dihydropterin. The chain is Dihydroneopterin aldolase (folB) from Streptococcus pyogenes.